Consider the following 379-residue polypeptide: Gonadotropin-releasing hormone II receptor (379 aa).

The Extracellular segment spans residues 1-40; it reads MSAGNGTPWGSAAGEESWAASGVAVEGSELPTFSAAAKVR. Residues 41 to 60 form a helical membrane-spanning segment; the sequence is VGVTIVLFVSSAGGNLAVLW. Residues 61-76 are Cytoplasmic-facing; that stretch reads SVTRPQPSQLRPSPVR. The helical transmembrane segment at 77–96 threads the bilayer; the sequence is TLFAHLAAADLLVTFVVMPL. Residues 97-114 lie on the Extracellular side of the membrane; that stretch reads DATWNITVQWLAEDIACR. N-linked (GlcNAc...) asparagine glycosylation is present at asparagine 101. A disulfide bridge links cysteine 113 with cysteine 188. The helical transmembrane segment at 115–136 threads the bilayer; that stretch reads TLMFLKLMAMYSAAFLPVVIGL. Residues 137–160 are Cytoplasmic-facing; sequence DRQAAVLNPLGSRSGVRKLLGAAW. Residues 161–178 form a helical membrane-spanning segment; the sequence is GLSFLLALPQLFLFHTVH. At 179-204 the chain is on the extracellular side; it reads RAGPVPFTQCVTKGSFKARWQETTYN. The helical transmembrane segment at 205 to 224 threads the bilayer; it reads LFTFRCLFLLPLTAMAICYS. Residues 225–278 are Cytoplasmic-facing; it reads HIVLSVSSPQTRKGSHAPAGEFALCRSFDNCPRVRLWALRLALLILLTFILCWT. Residues 279–297 traverse the membrane as a helical segment; sequence PYYLLGLWYWFSPTMLTEV. Residues 298–303 are Extracellular-facing; sequence PPSLSH. Residues 304–323 traverse the membrane as a helical segment; the sequence is ILFLFGLLNAPLDPLLYGAF. The Cytoplasmic segment spans residues 324–379; that stretch reads TLGCQRGHQELSIDSSNEGSGRMLQQEIHALRQQEVQKTVTSRSAGETKDISITSI.

The protein belongs to the G-protein coupled receptor 1 family. In terms of processing, phosphorylated on the C-terminal cytoplasmic tail.

It localises to the cell membrane. Functionally, receptor for gonadotropin releasing hormone II (GnRH II). This receptor mediates its action by association with G proteins that activate a phosphatidylinositol-calcium second messenger system. In Macaca mulatta (Rhesus macaque), this protein is Gonadotropin-releasing hormone II receptor (GNRHR2).